Here is a 642-residue protein sequence, read N- to C-terminus: Probable Xaa-Pro aminopeptidase P (642 aa).

Mn(2+) is bound by residues D439, D450, E548, and E562.

This sequence belongs to the peptidase M24B family. Mn(2+) is required as a cofactor.

The enzyme catalyses Release of any N-terminal amino acid, including proline, that is linked to proline, even from a dipeptide or tripeptide.. Its function is as follows. Catalyzes the removal of a penultimate prolyl residue from the N-termini of peptides. This is Probable Xaa-Pro aminopeptidase P (AMPP) from Laccaria bicolor (strain S238N-H82 / ATCC MYA-4686) (Bicoloured deceiver).